We begin with the raw amino-acid sequence, 407 residues long: Cation efflux system protein CusB (407 aa).

Positions 1–28 (MKKIALIIGSMIAGGIISAAGFTWVAKA) are cleaved as a signal peptide.

Belongs to the membrane fusion protein (MFP) (TC 8.A.1) family. As to quaternary structure, the cus efflux system is composed of CusA, CusB, CusC and CusF.

Part of a cation efflux system that mediates resistance to copper and silver. This Escherichia coli (strain K12) protein is Cation efflux system protein CusB (cusB).